The following is a 278-amino-acid chain: NAD-capped RNA hydrolase NudC (278 aa).

A substrate-binding site is contributed by R84. Zn(2+)-binding residues include C114 and C117. E127 contacts substrate. Zn(2+)-binding residues include C132 and C135. Substrate is bound at residue Y140. Residues 141–265 (PRLSPSMIVL…IARHLIDLYL (125 aa)) form the Nudix hydrolase domain. A divalent metal cation contacts are provided by A174, E190, and E194. The Nudix box motif lies at 175–196 (GFVEAGESVEQCVVREVREEVG). 208–215 (QNWPFPHS) provides a ligand contact to substrate. E235 serves as a coordination point for a divalent metal cation. A257 lines the substrate pocket.

Belongs to the Nudix hydrolase family. NudC subfamily. In terms of assembly, homodimer. Mg(2+) is required as a cofactor. It depends on Mn(2+) as a cofactor. Requires Zn(2+) as cofactor.

It carries out the reaction a 5'-end NAD(+)-phospho-ribonucleoside in mRNA + H2O = a 5'-end phospho-adenosine-phospho-ribonucleoside in mRNA + beta-nicotinamide D-ribonucleotide + 2 H(+). The enzyme catalyses NAD(+) + H2O = beta-nicotinamide D-ribonucleotide + AMP + 2 H(+). The catalysed reaction is NADH + H2O = reduced beta-nicotinamide D-ribonucleotide + AMP + 2 H(+). MRNA decapping enzyme that specifically removes the nicotinamide adenine dinucleotide (NAD) cap from a subset of mRNAs by hydrolyzing the diphosphate linkage to produce nicotinamide mononucleotide (NMN) and 5' monophosphate mRNA. The NAD-cap is present at the 5'-end of some mRNAs and stabilizes RNA against 5'-processing. Has preference for mRNAs with a 5'-end purine. Catalyzes the hydrolysis of a broad range of dinucleotide pyrophosphates. The protein is NAD-capped RNA hydrolase NudC of Pseudomonas aeruginosa (strain LESB58).